The sequence spans 465 residues: Hexokinase-4 (465 aa).

Residues 10 to 454 (ATKKEKVEQI…SGRGAALVSA (445 aa)) form the Hexokinase domain. Positions 67–203 (EGSEVGDFLS…DFEMDVVAMV (137 aa)) are hexokinase small subdomain. ATP is bound at residue 78-83 (DLGGTN). Substrate contacts are provided by residues 151-152 (SF), 168-169 (TK), and 204-205 (ND). Positions 204 to 443 (NDTVATMISC…CEITFIESEE (240 aa)) are hexokinase large subdomain. T228 contributes to the ATP binding site. Substrate is bound by residues N231, E256, and E290. ATP-binding positions include 295–296 (GK), 332–336 (TRFVS), and 411–415 (SVYKL).

It belongs to the hexokinase family. As to quaternary structure, monomer. Interacts with MIDN; the interaction occurs preferentially at low glucose levels and results in inhibition of hexokinase activity. Interacts with GCKR; leading to sequestration in the nucleus.

Its subcellular location is the cytoplasm. It localises to the nucleus. It is found in the mitochondrion. It carries out the reaction a D-hexose + ATP = a D-hexose 6-phosphate + ADP + H(+). It catalyses the reaction D-fructose + ATP = D-fructose 6-phosphate + ADP + H(+). The enzyme catalyses D-glucose + ATP = D-glucose 6-phosphate + ADP + H(+). The catalysed reaction is D-mannose + ATP = D-mannose 6-phosphate + ADP + H(+). It functions in the pathway carbohydrate metabolism; hexose metabolism. The protein operates within carbohydrate degradation; glycolysis; D-glyceraldehyde 3-phosphate and glycerone phosphate from D-glucose: step 1/4. Its activity is regulated as follows. Subject to allosteric regulation. Low glucose and high fructose-6-phosphate triggers association with the inhibitor GCKR followed by sequestration in the nucleus. In terms of biological role, catalyzes the phosphorylation of hexose, such as D-glucose, D-fructose and D-mannose, to hexose 6-phosphate (D-glucose 6-phosphate, D-fructose 6-phosphate and D-mannose 6-phosphate, respectively). Compared to other hexokinases, has a weak affinity for D-glucose, and is effective only when glucose is abundant. Mainly expressed in pancreatic beta cells and the liver and constitutes a rate-limiting step in glucose metabolism in these tissues. Since insulin secretion parallels glucose metabolism and the low glucose affinity of GCK ensures that it can change its enzymatic activity within the physiological range of glucose concentrations, GCK acts as a glucose sensor in the pancreatic beta cell. In pancreas, plays an important role in modulating insulin secretion. In liver, helps to facilitate the uptake and conversion of glucose by acting as an insulin-sensitive determinant of hepatic glucose usage. Required to provide D-glucose 6-phosphate for the synthesis of glycogen. Mediates the initial step of glycolysis by catalyzing phosphorylation of D-glucose to D-glucose 6-phosphate. This chain is Hexokinase-4, found in Mus musculus (Mouse).